The chain runs to 90 residues: DNA-directed RNA polymerase subunit Rpo11 (90 aa).

Belongs to the archaeal Rpo11/eukaryotic RPB11/RPC19 RNA polymerase subunit family. In terms of assembly, part of the RNA polymerase complex.

It localises to the cytoplasm. It carries out the reaction RNA(n) + a ribonucleoside 5'-triphosphate = RNA(n+1) + diphosphate. In terms of biological role, DNA-dependent RNA polymerase (RNAP) catalyzes the transcription of DNA into RNA using the four ribonucleoside triphosphates as substrates. The sequence is that of DNA-directed RNA polymerase subunit Rpo11 from Metallosphaera sedula (strain ATCC 51363 / DSM 5348 / JCM 9185 / NBRC 15509 / TH2).